The chain runs to 888 residues: Bifunctional lysine-specific demethylase and histidyl-hydroxylase NO66 (888 aa).

Disordered regions lie at residues 83 to 157, 187 to 208, and 261 to 446; these read AAAK…GSFS, SNNSDFDFDSDGDSNDFDDSDA, and NSTS…NKLS. The segment covering 98 to 108 has biased composition (basic and acidic residues); the sequence is REKNIAKKQPE. The segment covering 116 to 139 has biased composition (polar residues); sequence ENVQKQLENGQENNGTLINLSNGK. Over residues 192–207 the composition is skewed to acidic residues; it reads FDFDSDGDSNDFDDSD. Positions 273–284 are enriched in basic and acidic residues; the sequence is VEPRKAAKRNEP. Over residues 392–403 the composition is skewed to low complexity; sequence KNKNNDNNNIDT. Residues 404 to 429 are compositionally biased toward basic and acidic residues; sequence NNKKDANNKKDANNNKDINNKKDANN. Over residues 430 to 444 the composition is skewed to low complexity; it reads NKDTNNNKDNNNKNK. Positions 564 to 709 constitute a JmjC domain; it reads CSIRILNPST…NLLEVLMPSV (146 aa). Positions 610, 612, and 675 each coordinate Fe cation.

Belongs to the ROX family. NO66 subfamily. Requires Fe(2+) as cofactor.

The protein resides in the nucleus. The enzyme catalyses N(6),N(6)-dimethyl-L-lysyl(36)-[histone H3] + 2 2-oxoglutarate + 2 O2 = L-lysyl(36)-[histone H3] + 2 formaldehyde + 2 succinate + 2 CO2. Its function is as follows. Oxygenase that can act as both a histone lysine demethylase and a ribosomal histidine hydroxylase. Specifically demethylates 'Lys-4' (H3K4me) and 'Lys-36' (H3K36me) of histone H3, thereby playing a central role in histone code. The protein is Bifunctional lysine-specific demethylase and histidyl-hydroxylase NO66 of Drosophila mojavensis (Fruit fly).